We begin with the raw amino-acid sequence, 232 residues long: Orotidine 5'-phosphate decarboxylase (232 aa).

Residues Asp13, Lys35, 62–71, Thr122, Arg182, Gln191, Gly211, and Arg212 contribute to the substrate site; that span reads DLKFHDIPNT. Lys64 (proton donor) is an active-site residue.

Belongs to the OMP decarboxylase family. Type 1 subfamily. In terms of assembly, homodimer.

It catalyses the reaction orotidine 5'-phosphate + H(+) = UMP + CO2. The protein operates within pyrimidine metabolism; UMP biosynthesis via de novo pathway; UMP from orotate: step 2/2. Functionally, catalyzes the decarboxylation of orotidine 5'-monophosphate (OMP) to uridine 5'-monophosphate (UMP). In Pseudomonas fluorescens (strain Pf0-1), this protein is Orotidine 5'-phosphate decarboxylase.